A 410-amino-acid polypeptide reads, in one-letter code: F-box protein At3g61340 (410 aa).

Positions glutamate 17–isoleucine 66 constitute an F-box domain.

This is F-box protein At3g61340 from Arabidopsis thaliana (Mouse-ear cress).